Here is a 666-residue protein sequence, read N- to C-terminus: Protein scarlet (666 aa).

At 1-417 the chain is on the cytoplasmic side; the sequence is MSDSDSKRID…TIQWLRFIQK (417 aa). A disordered region spans residues 26 to 55; sequence PVGSTIEVPSLDSTPKLSKRNSSERSLPLR. Residues 69-316 enclose the ABC transporter domain; the sequence is LVWRDLCVYT…FANHGYYCPE (248 aa). An ATP-binding site is contributed by 108 to 115; that stretch reads GSSGSGKT. Residues 418-438 traverse the membrane as a helical segment; it reads IAMAFIIGACFAGTTEPSQLG. Residues 439–444 are Extracellular-facing; sequence VQAVQG. The helical transmembrane segment at 445–465 threads the bilayer; sequence ALFIMISENTYHPMYSVLNLF. Over 466–490 the chain is Cytoplasmic; that stretch reads PQGFPLFMRETRSGLYSTGQYYAAN. The chain crosses the membrane as a helical span at residues 491-511; it reads ILALLPGMIIEPLIFVIICYW. Topologically, residues 512–518 are extracellular; it reads LTGLRST. A helical transmembrane segment spans residues 519 to 539; sequence FYAFGVTAMCVVLVMNVATAC. At 540–551 the chain is on the cytoplasmic side; that stretch reads GCFFSTAFNSVP. A helical transmembrane segment spans residues 552–572; the sequence is LAMAYLVPLDYIFMITSGIFI. Topologically, residues 573-639 are extracellular; the sequence is QVNSLPVAFW…YSFNESNVYR (67 aa). Asn607 and Asn633 each carry an N-linked (GlcNAc...) asparagine glycan. A helical membrane pass occupies residues 640–660; the sequence is NLLAMVGLYFGFHLLGYYCLW. Topologically, residues 661–666 are cytoplasmic; sequence RRARKL.

Belongs to the ABC transporter superfamily. ABCG family. Eye pigment precursor importer (TC 3.A.1.204) subfamily. May form a heterodimer with w/white. Expressed in the eye, specifically in primary pigment cells, secondary pigment cells and retinula cells (at protein level).

The protein localises to the cytoplasmic vesicle membrane. It catalyses the reaction L-kynurenine(out) + ATP + H2O = L-kynurenine(in) + ADP + phosphate + H(+). ATP-dependent transporter of the ATP-binding cassette (ABC) family which transports various molecules including bioamines, neurotransmitters and metabolic intermediates. In the eye and probably in association with w/white, required for the transport of the eye brown pigment precursors, kynurenine and probably tryptophan, into pigment cell granules. In Malpighian tubules and pupal eyes, involved in kynurenine transport. Probably in association with w/white, plays a role in zinc storage granule biogenesis in Malpighian tubule principal epithelial cells. In Drosophila melanogaster (Fruit fly), this protein is Protein scarlet.